The following is a 623-amino-acid chain: Oviduct-specific glycoprotein (623 aa).

Positions 1–21 (MWKLLLWVGLVLVLKHHDGAA) are cleaved as a signal peptide. Positions 22–385 (HKLVCYFTNW…YVMNDILVRA (364 aa)) constitute a GH18 domain. The cysteines at positions 26 and 51 are disulfide-linked. Chitin is bound by residues 71–72 (LQ), 98–101 (GGWN), Y142, 211–214 (LSYD), and W355. N-linked (GlcNAc...) asparagine glycans are attached at residues N402 and N441. 2 disordered regions span residues 539 to 558 (LTPV…VSPG) and 594 to 623 (RKIS…PQDG). Polar residues predominate over residues 613–623 (TSETGTHPQDG).

This sequence belongs to the glycosyl hydrolase 18 family. As to expression, oviduct.

Its subcellular location is the cytoplasmic vesicle. It localises to the secretory vesicle. Its function is as follows. Binds to oocyte zona pellucida in vivo. May play a role in the fertilization process and/or early embryonic development. This is Oviduct-specific glycoprotein (OVGP1) from Papio anubis (Olive baboon).